Reading from the N-terminus, the 274-residue chain is Photosystem II extrinsic protein O (274 aa).

The N-terminal stretch at 1–28 is a signal peptide; the sequence is MRFRPSIVALLSVCFGLLTFLYSGSAFA.

This sequence belongs to the PsbO family. PSII is composed of 1 copy each of membrane proteins PsbA, PsbB, PsbC, PsbD, PsbE, PsbF, PsbH, PsbI, PsbJ, PsbK, PsbL, PsbM, PsbT, PsbX, PsbY, PsbZ, Psb30/Ycf12, peripheral proteins PsbO, CyanoQ (PsbQ), PsbU, PsbV and a large number of cofactors. It forms dimeric complexes. Contacts PsbQ.

It is found in the cellular thylakoid membrane. Its function is as follows. One of the extrinsic, lumenal subunits of photosystem II (PSII), which stabilize and protect the oxygen-evolving complex. PSII is a light-driven water plastoquinone oxidoreductase, using light energy to abstract electrons from H(2)O, generating a proton gradient subsequently used for ATP formation. Required for dimerization of PSII and for binding of PsbQ to PSII. The sequence is that of Photosystem II extrinsic protein O from Synechocystis sp. (strain ATCC 27184 / PCC 6803 / Kazusa).